We begin with the raw amino-acid sequence, 321 residues long: Glucokinase (321 aa).

8 to 13 (GDVGGT) contacts ATP.

Belongs to the bacterial glucokinase family.

The protein resides in the cytoplasm. The catalysed reaction is D-glucose + ATP = D-glucose 6-phosphate + ADP + H(+). This is Glucokinase from Shigella flexneri serotype 5b (strain 8401).